Here is a 1245-residue protein sequence, read N- to C-terminus: Structural polyprotein (1245 aa).

The tract at residues 1-106 (MNRGFFNMLG…KTKPGKRQRM (106 aa)) is disordered. The interval 37-70 (GLASQIQQLTTAVSALVIGQATRPQNPRPRPPPR) is host transcription inhibition. Residues 38 to 49 (LASQIQQLTTAV) are compositionally biased toward polar residues. The Nuclear localization signal signature appears at 63 to 100 (PRPRPPPRQKKQAPKQPPKPKKPKPQEKKKKQPAKTKP). The span at 67–106 (PPPRQKKQAPKQPPKPKKPKPQEKKKKQPAKTKPGKRQRM) shows a compositional bias: basic residues. The tract at residues 86-115 (KPQEKKKKQPAKTKPGKRQRMALKLEADRL) is binding to the viral RNA. The tract at residues 100-114 (PGKRQRMALKLEADR) is ribosome-binding. The 151-residue stretch at 114 to 264 (RLFDVKNEDG…KTTPEGTEEW (151 aa)) folds into the Peptidase S3 domain. Catalysis depends on His-141, which acts as the Charge relay system. Positions 146 to 156 (IDHPVLSKLKF) match the Nuclear export signal motif. The tract at residues 157–162 (TKSSAY) is interaction with spike glycoprotein E2. Asp-163 (charge relay system) is an active-site residue. Residues 185–195 (PEGFYNWHHGA) are dimerization of the capsid protein. Ser-215 (charge relay system) is an active-site residue. The tract at residues 221 to 225 (DNSGR) is dimerization of the capsid protein. The interval 249-253 (SKGKT) is interaction with spike glycoprotein E2. Positions 265–279 (SAAPLVTAMCLLGNV) are functions as an uncleaved signal peptide for the precursor of protein E3/E2. N-linked (GlcNAc...) asparagine; by host glycosylation is present at Asn-278. Cystine bridges form between Cys-283/Cys-289, Cys-480/Cys-594, Cys-529/Cys-554, and Cys-531/Cys-548. Over 329 to 690 (SVTDDFTLTS…HEIVQHYYHR (362 aa)) the chain is Extracellular. A glycan (N-linked (GlcNAc...) asparagine; by host) is linked at Asn-524. Residue Asn-646 is glycosylated (N-linked (GlcNAc...) asparagine; by host). A helical transmembrane segment spans residues 691–718 (HPVYTILAVASAAVAMMIGVTVAALCAC). Residues 719-723 (KARRE) are interaction with the capsid protein. Residues 719–751 (KARRECLTPYALAPNAVIPTSLALLCCVRSANA) lie on the Cytoplasmic side of the membrane. 3 S-palmitoyl cysteine; by host lipidation sites follow: Cys-724, Cys-744, and Cys-745. A disulfide bridge links Cys-724 with Cys-745. Residues 752-763 (ETFTETMSYFWS) are Extracellular-facing. The chain crosses the membrane as a helical span at residues 764 to 784 (NSQPFFWVQLCIPLAAVIVLM). Position 785 (Arg-785) is a topological domain, cytoplasmic. The chain crosses the membrane as a helical span at residues 786–806 (CCSCCLPFLVVAGAYLAKVDA). Residues 807–1214 (YEHATTVPNV…QAAISKTSWS (408 aa)) lie on the Extracellular side of the membrane. Disulfide bonds link Cys-855-Cys-920, Cys-868-Cys-900, Cys-869-Cys-902, and Cys-874-Cys-884. An E1 fusion peptide loop region spans residues 890–907 (VYPFMWGGAQCFCDSENS). Asn-945 and Asn-1051 each carry an N-linked (GlcNAc...) asparagine; by host glycan. Intrachain disulfides connect Cys-1065–Cys-1077, Cys-1107–Cys-1182, Cys-1112–Cys-1186, and Cys-1134–Cys-1176. Residues 1215 to 1239 (WLFALFGGASSLLIIGLTIFACSMM) traverse the membrane as a helical segment. Residues 1240–1245 (LTSTRR) are Cytoplasmic-facing.

As to quaternary structure, homodimer. Homomultimer. Interacts with host karyopherin KPNA4; this interaction allows the nuclear import of the viral capsid protein. Interacts with spike glycoprotein E2. Interacts with host IRAK1; the interaction leads to inhibition of IRAK1-dependent signaling. In terms of assembly, the precursor of protein E3/E2 and E1 form a heterodimer shortly after synthesis. The precursor of protein E3/E2 and E1 form a heterodimer shortly after synthesis. Processing of the precursor of protein E3/E2 into E2 and E3 results in a heterodimer of the spike glycoproteins E2 and E1. Spike at virion surface are constituted of a trimer of E2-E1 heterodimers. After target cell attachment and endocytosis, E1 change conformation to form homotrimers. E2-E1 heterodimers interact with host VLDLR or LRP8/APOER2 to mediate viral entry. Interacts with 6K protein. As to quaternary structure, processing of the precursor of protein E3/E2 into E2 and E3 results in a heterodimer of the spike glycoproteins E2 and E1. Spike at virion surface are constituted of a trimer of E2-E1 heterodimers. E2-E1 heterodimers interact with host VLDLR or LRP8/APOER2 to mediate viral entry. Interacts with 6K protein. Interacts with the capsid protein. In terms of assembly, oligomer. Interacts with spike glycoprotein E1. Interacts with spike glycoprotein E2. In terms of processing, structural polyprotein: Specific enzymatic cleavages in vivo yield mature proteins. Capsid protein is auto-cleaved during polyprotein translation, unmasking a signal peptide at the N-terminus of the precursor of E3/E2. The remaining polyprotein is then targeted to the host endoplasmic reticulum, where host signal peptidase cleaves it into pE2, 6K and E1 proteins. pE2 is further processed to mature E3 and E2 by host furin in trans-Golgi vesicle. Palmitoylated via thioester bonds. These palmitoylations may induce disruption of the C-terminus transmembrane. This would result in the reorientation of E2 C-terminus from lumenal to cytoplasmic side. Post-translationally, N-glycosylated. In terms of processing, palmitoylated via thioester bonds.

The protein resides in the virion. The protein localises to the host cytoplasm. It localises to the host cell membrane. It is found in the host nucleus. Its subcellular location is the virion membrane. The protein resides in the host Golgi apparatus. The protein localises to the host trans-Golgi network. It localises to the host endoplasmic reticulum. It carries out the reaction Autocatalytic release of the core protein from the N-terminus of the togavirus structural polyprotein by hydrolysis of a -Trp-|-Ser- bond.. In terms of biological role, forms an icosahedral capsid with a T=4 symmetry composed of 240 copies of the capsid protein surrounded by a lipid membrane through which penetrate 80 spikes composed of trimers of E1-E2 heterodimers. The capsid protein binds to the viral RNA genome at a site adjacent to a ribosome binding site for viral genome translation following genome release. Possesses a protease activity that results in its autocatalytic cleavage from the nascent structural protein. Following its self-cleavage, the capsid protein transiently associates with ribosomes, and within several minutes the protein binds to viral RNA and rapidly assembles into icosahedric core particles. The resulting nucleocapsid eventually associates with the cytoplasmic domain of the spike glycoprotein E2 at the cell membrane, leading to budding and formation of mature virions. In case of infection, new virions attach to target cells and after clathrin-mediated endocytosis their membrane fuses with the host endosomal membrane. This leads to the release of the nucleocapsid into the cytoplasm, followed by an uncoating event necessary for the genomic RNA to become accessible. The uncoating might be triggered by the interaction of capsid proteins with ribosomes. Binding of ribosomes would release the genomic RNA since the same region is genomic RNA-binding and ribosome-binding. Specifically inhibits interleukin-1 receptor-associated kinase 1/IRAK1-dependent signaling during viral entry, representing a means by which the alphaviruses may evade innate immune detection and activation prior to viral gene expression. Its function is as follows. Provides the signal sequence for the translocation of the precursor of protein E3/E2 to the host endoplasmic reticulum. Furin-cleaved E3 remains associated with spike glycoprotein E1 and mediates pH protection of the latter during the transport via the secretory pathway. After virion release from the host cell, the assembly protein E3 is gradually released in the extracellular space. Functionally, plays a role in viral attachment to target host cell, by binding to the cell receptors VLDLR or LRP8/APOER2. Synthesized as a pE2 precursor which is processed by furin at the cell membrane just before virion budding, giving rise to E2-E1 heterodimer. The pE2-E1 heterodimer is stable, whereas E2-E1 is unstable and dissociate at low pH. pE2 is processed at the last step, presumably to avoid E1 fusion activation before its final export to cell surface. E2 C-terminus contains a transitory transmembrane that would be disrupted by palmitoylation, resulting in reorientation of the C-terminal tail from lumenal to cytoplasmic side. This step is critical since E2 C-terminus is involved in budding by interacting with capsid proteins. This release of E2 C-terminus in cytoplasm occurs lately in protein export, and precludes premature assembly of particles at the endoplasmic reticulum membrane. Acts as a viroporin that participates in virus glycoprotein processing and transport to the plasma membrane, cell permeabilization and budding of viral particles. Disrupts the calcium homeostasis of the cell, probably at the endoplasmic reticulum level resulting in the increased levels of cytoplasmic calcium. Because of its lipophilic properties, the 6K protein is postulated to influence the selection of lipids that interact with the transmembrane domains of the glycoproteins, which, in turn, affects the deformability of the bilayer required for the extreme curvature that occurs as budding proceeds. Present in low amount in virions, about 3% compared to viral glycoproteins. In terms of biological role, class II viral fusion protein. Fusion activity is inactive as long as E1 is bound to E2 in mature virion. After virus attachment to target cell via host VLDLR or LRP8/APOER2 and endocytosis, acidification of the endosome induces dissociation of E1/E2 heterodimer and concomitant trimerization of the E1 subunits. This E1 trimer is fusion active, and promotes release of viral nucleocapsid in cytoplasm after endosome and viral membrane fusion. Efficient fusion requires the presence of cholesterol and sphingolipid in the target membrane. The chain is Structural polyprotein from Acrocephalus scirpaceus (Eurasian reed-warbler).